The following is a 359-amino-acid chain: Phospho-N-acetylmuramoyl-pentapeptide-transferase (359 aa).

The next 10 membrane-spanning stretches (helical) occupy residues 3-23 (LILI…PALI), 55-75 (VAIL…GMAM), 80-100 (PSAS…VGFI), 117-137 (TAKT…ALQF), 156-176 (IATV…VVSA), 187-207 (LDGL…LITF), 231-251 (LALV…WNAA), 255-275 (IFMG…ISVT), 280-300 (ILAV…VVQI), and 334-354 (FWLL…GEWL).

It belongs to the glycosyltransferase 4 family. MraY subfamily. It depends on Mg(2+) as a cofactor.

The protein localises to the cell membrane. It catalyses the reaction UDP-N-acetyl-alpha-D-muramoyl-L-alanyl-gamma-D-glutamyl-meso-2,6-diaminopimeloyl-D-alanyl-D-alanine + di-trans,octa-cis-undecaprenyl phosphate = di-trans,octa-cis-undecaprenyl diphospho-N-acetyl-alpha-D-muramoyl-L-alanyl-D-glutamyl-meso-2,6-diaminopimeloyl-D-alanyl-D-alanine + UMP. It functions in the pathway cell wall biogenesis; peptidoglycan biosynthesis. Catalyzes the initial step of the lipid cycle reactions in the biosynthesis of the cell wall peptidoglycan: transfers peptidoglycan precursor phospho-MurNAc-pentapeptide from UDP-MurNAc-pentapeptide onto the lipid carrier undecaprenyl phosphate, yielding undecaprenyl-pyrophosphoryl-MurNAc-pentapeptide, known as lipid I. The protein is Phospho-N-acetylmuramoyl-pentapeptide-transferase of Mycolicibacterium smegmatis (strain ATCC 700084 / mc(2)155) (Mycobacterium smegmatis).